The following is a 267-amino-acid chain: Hydroxynaphthalene reductase-like protein Arp2 (267 aa).

The NADP(+) site is built by Ile25, Asn45, Asp71, and Asn98. Residues Ser147 and Ser148 each act as proton donor in the active site. Residues Tyr162, Lys166, Val195, and Thr197 each coordinate NADP(+). Residue Tyr162 is the Proton acceptor of the active site. Lys166 (lowers pKa of active site Tyr) is an active-site residue.

This sequence belongs to the short-chain dehydrogenases/reductases (SDR) family.

Functionally, hydroxynaphthalene reductase-like protein; part of the Pks2 gene cluster that mediates the formation of infectious structures (appressoria), enabling these fungi to kill insects faster. The product of the Pks2 gene cluster is different from the one of Pks1 and has still not been identified. The polypeptide is Hydroxynaphthalene reductase-like protein Arp2 (Metarhizium guizhouense (strain ARSEF 977)).